The primary structure comprises 277 residues: Phosphate import ATP-binding protein PstB (277 aa).

The region spanning 31-272 (IEVPGLSLYY…PAKKQTEDYI (242 aa)) is the ABC transporter domain. 63–70 (GPSGCGKS) contacts ATP.

Belongs to the ABC transporter superfamily. Phosphate importer (TC 3.A.1.7) family. The complex is composed of two ATP-binding proteins (PstB), two transmembrane proteins (PstC and PstA) and a solute-binding protein (PstS).

The protein resides in the cell inner membrane. It carries out the reaction phosphate(out) + ATP + H2O = ADP + 2 phosphate(in) + H(+). In terms of biological role, part of the ABC transporter complex PstSACB involved in phosphate import. Responsible for energy coupling to the transport system. The chain is Phosphate import ATP-binding protein PstB from Pseudomonas fluorescens (strain ATCC BAA-477 / NRRL B-23932 / Pf-5).